A 98-amino-acid chain; its full sequence is Large ribosomal subunit protein uL23 (98 aa).

This sequence belongs to the universal ribosomal protein uL23 family. Part of the 50S ribosomal subunit. Contacts protein L29, and trigger factor when it is bound to the ribosome.

Functionally, one of the early assembly proteins it binds 23S rRNA. One of the proteins that surrounds the polypeptide exit tunnel on the outside of the ribosome. Forms the main docking site for trigger factor binding to the ribosome. This is Large ribosomal subunit protein uL23 from Clostridium acetobutylicum (strain ATCC 824 / DSM 792 / JCM 1419 / IAM 19013 / LMG 5710 / NBRC 13948 / NRRL B-527 / VKM B-1787 / 2291 / W).